We begin with the raw amino-acid sequence, 344 residues long: Heat-inducible transcription repressor HrcA (344 aa).

The protein belongs to the HrcA family.

Negative regulator of class I heat shock genes (grpE-dnaK-dnaJ and groELS operons). Prevents heat-shock induction of these operons. This is Heat-inducible transcription repressor HrcA from Streptococcus pyogenes serotype M6 (strain ATCC BAA-946 / MGAS10394).